The primary structure comprises 220 residues: Endonuclease NucS (220 aa).

Belongs to the NucS endonuclease family.

The protein resides in the cytoplasm. In terms of biological role, cleaves both 3' and 5' ssDNA extremities of branched DNA structures. The protein is Endonuclease NucS of Frankia alni (strain DSM 45986 / CECT 9034 / ACN14a).